A 456-amino-acid polypeptide reads, in one-letter code: Senecionine N-oxygenase (456 aa).

Residues Met1 to Ala22 form the signal peptide. Gly32–Gly37 is a binding site for FAD. Gly215–Gly220 provides a ligand contact to NADP(+).

The protein belongs to the FMO family. Homotetramer. It depends on FAD as a cofactor. As to expression, hemolymph.

The protein localises to the secreted. It carries out the reaction senecionine + NADPH + O2 = senecionine N-oxide + NADP(+) + H2O. NADPH-dependent monooxygenase that detoxifies senecionine and similar plant alkaloids that are ingested by the larvae. Is active towards a narrow range of related substrates with highest activity towards senecionine, followed by seneciphylline, retrorsine, monocrotaline, senecivernine, axillarine and axillaridine. In Tyria jacobaeae (Cinnabar moth), this protein is Senecionine N-oxygenase (sno1).